The sequence spans 295 residues: Glycine--tRNA ligase alpha subunit (295 aa).

This sequence belongs to the class-II aminoacyl-tRNA synthetase family. Tetramer of two alpha and two beta subunits.

The protein localises to the cytoplasm. It catalyses the reaction tRNA(Gly) + glycine + ATP = glycyl-tRNA(Gly) + AMP + diphosphate. The protein is Glycine--tRNA ligase alpha subunit of Prochlorococcus marinus (strain MIT 9215).